We begin with the raw amino-acid sequence, 213 residues long: ER lumen protein-retaining receptor erd-2.2 (213 aa).

Topologically, residues 1-2 (MN) are lumenal. A helical transmembrane segment spans residues 3–21 (IFRISADMSHLLAIIILLL). Residues 22-35 (KIWKSRSCSGISAR) are Cytoplasmic-facing. The helical transmembrane segment at 36-53 (SQILFALVFTARYLDLFS) threads the bilayer. Residues 54–61 (TYISLYNT) lie on the Lumenal side of the membrane. A helical membrane pass occupies residues 62–80 (TMKITFLAATYATVYLMFF). The Cytoplasmic portion of the chain corresponds to 81-96 (KFRSTYMRESDTFRVE). A helical transmembrane segment spans residues 97 to 110 (LLIVPAAILALLIN). Over 111-117 (HDFAPFE) the chain is Lumenal. Residues 118–137 (LLWTFSIYLEAVAILPQLFL) traverse the membrane as a helical segment. Topologically, residues 138 to 149 (LQSTGSAEVITA) are cytoplasmic. Residues 150–168 (HYLFALGSYRALYIFNWIY) traverse the membrane as a helical segment. Residues 169 to 178 (RYYTEDYFDP) lie on the Lumenal side of the membrane. The helical transmembrane segment at 179-199 (IVVVAGIVQTVLYADFFYLYV) threads the bilayer. At 200 to 213 (TRVVQTRKGMELPI) the chain is on the cytoplasmic side.

This sequence belongs to the ERD2 family.

The protein resides in the endoplasmic reticulum membrane. Its function is as follows. Required for the retention of luminal endoplasmic reticulum proteins. Determines the specificity of the luminal ER protein retention system. Also required for normal vesicular traffic through the Golgi. This Caenorhabditis elegans protein is ER lumen protein-retaining receptor erd-2.2.